We begin with the raw amino-acid sequence, 396 residues long: Argininosuccinate synthase (396 aa).

Residues 10 to 18 and A37 contribute to the ATP site; that span reads AYSGGLDTS. L-citrulline contacts are provided by Y88 and S93. ATP is bound at residue G118. T120, N124, and D125 together coordinate L-aspartate. N124 contributes to the L-citrulline binding site. L-citrulline contacts are provided by R128, S176, S185, E261, and Y273.

The protein belongs to the argininosuccinate synthase family. Type 1 subfamily. In terms of assembly, homotetramer.

The protein localises to the cytoplasm. The enzyme catalyses L-citrulline + L-aspartate + ATP = 2-(N(omega)-L-arginino)succinate + AMP + diphosphate + H(+). It functions in the pathway amino-acid biosynthesis; L-arginine biosynthesis; L-arginine from L-ornithine and carbamoyl phosphate: step 2/3. The polypeptide is Argininosuccinate synthase (Nitratidesulfovibrio vulgaris (strain ATCC 29579 / DSM 644 / CCUG 34227 / NCIMB 8303 / VKM B-1760 / Hildenborough) (Desulfovibrio vulgaris)).